The sequence spans 220 residues: U1 small nuclear ribonucleoprotein C (220 aa).

The segment at 4–36 (FFCDYCDVYLTHDSISVRKAHNSGRNHLRNVVD) adopts a Matrin-type zinc-finger fold. Residues 197-220 (PLGGFPAGAPLPGAPPGYGPPGAK) are disordered. The segment covering 208 to 220 (PGAPPGYGPPGAK) has biased composition (pro residues).

Belongs to the U1 small nuclear ribonucleoprotein C family. U1 snRNP is composed of the 7 core Sm proteins B/B', D1, D2, D3, E, F and G that assemble in a heptameric protein ring on the Sm site of the small nuclear RNA to form the core snRNP, and at least 3 U1 snRNP-specific proteins U1-70K, U1-A and U1-C. U1-C interacts with U1 snRNA and the 5' splice-site region of the pre-mRNA.

It localises to the nucleus. Component of the spliceosomal U1 snRNP, which is essential for recognition of the pre-mRNA 5' splice-site and the subsequent assembly of the spliceosome. U1-C is directly involved in initial 5' splice-site recognition for both constitutive and regulated alternative splicing. The interaction with the 5' splice-site seems to precede base-pairing between the pre-mRNA and the U1 snRNA. Stimulates commitment or early (E) complex formation by stabilizing the base pairing of the 5' end of the U1 snRNA and the 5' splice-site region. This chain is U1 small nuclear ribonucleoprotein C, found in Tuber melanosporum (strain Mel28) (Perigord black truffle).